A 228-amino-acid polypeptide reads, in one-letter code: MAKSKAYRAAAEKIDPAKAYTASEAVELARETGSSKFDSTVEVALKLGVDPRKADQMVRGTVILPHGTGKTARVIVFATGPAAEAAIAAGADEVGGDELIEKVAGGYTSFDSAVSTPELMGKVGRLGKVLGPRGLMPNPKTGTVTPDVARAVSDIKGGKIEFRVDKHANVHFVVGKASFSPEQLSENVGAALEEIVRLKPSSSKGRYVQKATVSTTFGPGIPVDVNSI.

It belongs to the universal ribosomal protein uL1 family. In terms of assembly, part of the 50S ribosomal subunit.

Its function is as follows. Binds directly to 23S rRNA. The L1 stalk is quite mobile in the ribosome, and is involved in E site tRNA release. In terms of biological role, protein L1 is also a translational repressor protein, it controls the translation of the L11 operon by binding to its mRNA. The protein is Large ribosomal subunit protein uL1 of Clavibacter michiganensis subsp. michiganensis (strain NCPPB 382).